The chain runs to 161 residues: Allophycocyanin alpha chain (161 aa).

At Asn-71 the chain carries N4-methylasparagine. Residue Cys-81 participates in (2R,3E)-phycocyanobilin binding.

It belongs to the phycobiliprotein family. As to quaternary structure, heterodimer of an alpha and a beta chain. Contains one covalently linked phycocyanobilin chromophore.

It is found in the cellular thylakoid membrane. In terms of biological role, light-harvesting photosynthetic bile pigment-protein from the phycobiliprotein complex. Allophycocyanin has a maximum absorption at approximately 650 nanometers. This is Allophycocyanin alpha chain (apcA) from Synechocystis sp. (strain PCC 6714) (Aphanocapsa sp. (strain PCC 6714)).